A 728-amino-acid chain; its full sequence is MPGALPMKKISLAVLSLTTLLAACGQPQTSPQSPAASAPSVAVPRTHALDIDPAQVVTTKNGDMYVRNQLVVNLRGHSADALADQLGGRVLDQLPELDVALIELPQGKDARSVGVALMREGQVLYAAAQTVQRQIEPVRTAQDQLGAQAVNQVFDTLPQYALDSNHLHAKAAWDAGFTGKGVKVGVIDDPSDVSHPDLRPNWAGKAYDPATNTTYTTVQGWIDAIDGFDGKVDNKVDPGIEHGTAVASTIAAAKNGQGIVGVAPDSKFYTAAIFQPGFIGDYLVARSVIWTVNQGAQVINNSWGGTGYSPLLKQAFDYALERDITVVVSAGNSYREEWRNPAQLPGVIASAALDINNDKAGFSTYGRHVSVAAPGVDVMLASPLFINADGTRKTGGYTKDGGSGYQLISGTSFSGPYTSGVAAVILGAKPDLDPHQVRRLMEETADGSVGSNKAGFDRETGYGLIRMDKLADRLKGSNMPQKGGAGRVKVEIQTPGGYVPGILADVILEGDGADGAVYAVQTDSDGYANFVSIAPGTYTLRVATPDLTLTGGQSDERDTYVGKLTVTSGSVLSTVAPQRVVLVKGAVDLNPVDPYEPNDTMAEAKPISYGKMTELAYIFGKPRDVDFFSFTGKAGDNIQADVHARTAIGGSLDSFLVLRDASGKNLAYNDDANGQDSVITFKLPADGTYFLEVSSCNILCKSNGDDASKGQDDDSPFNKYVLELQLLK.

The N-terminal stretch at M1–A22 is a signal peptide. A propeptide spanning residues A23–Q148 is cleaved from the precursor. Residues Q159–A471 enclose the Peptidase S8 domain. Catalysis depends on charge relay system residues D188, H242, and S412.

Belongs to the peptidase S8 family.

The protein localises to the secreted. This is Probable subtilase-type serine protease DR_A0283 from Deinococcus radiodurans (strain ATCC 13939 / DSM 20539 / JCM 16871 / CCUG 27074 / LMG 4051 / NBRC 15346 / NCIMB 9279 / VKM B-1422 / R1).